A 155-amino-acid polypeptide reads, in one-letter code: Ribosome maturation factor RimP (155 aa).

Belongs to the RimP family.

It localises to the cytoplasm. Its function is as follows. Required for maturation of 30S ribosomal subunits. The protein is Ribosome maturation factor RimP of Gloeothece citriformis (strain PCC 7424) (Cyanothece sp. (strain PCC 7424)).